Reading from the N-terminus, the 198-residue chain is Ribonuclease HII (198 aa).

In terms of domain architecture, RNase H type-2 spans 10-198; sequence QLVAGVDEVG…PVKRALGLAS (189 aa). A divalent metal cation-binding residues include aspartate 16, glutamate 17, and aspartate 108.

This sequence belongs to the RNase HII family. Requires Mn(2+) as cofactor. The cofactor is Mg(2+).

The protein localises to the cytoplasm. The enzyme catalyses Endonucleolytic cleavage to 5'-phosphomonoester.. Its function is as follows. Endonuclease that specifically degrades the RNA of RNA-DNA hybrids. The chain is Ribonuclease HII from Shigella dysenteriae serotype 1 (strain Sd197).